The primary structure comprises 281 residues: sn-glycerol-3-phosphate transport system permease protein UgpE (281 aa).

The next 6 membrane-spanning stretches (helical) occupy residues 16–36 (LILGIAVILFPLYVAFVAATL), 85–105 (FSITVGKITVSMLSAFAIVWF), 113–133 (FFWMIFITLMLPVEVRIFPTV), 142–162 (LNSYAGLTLPLMASATATFLF), 202–222 (ALFVITFIYGWNQYLWPLLII), and 247–267 (WNQVMAAMLLTLIPPVVIVLA). The 192-residue stretch at 77 to 268 (MLNSFIMAFS…IPPVVIVLAM (192 aa)) folds into the ABC transmembrane type-1 domain.

The protein belongs to the binding-protein-dependent transport system permease family. UgpAE subfamily. As to quaternary structure, the complex is composed of two ATP-binding proteins (UgpC), two transmembrane proteins (UgpA and UgpE) and a solute-binding protein (UgpB).

It is found in the cell inner membrane. Part of the ABC transporter complex UgpBAEC involved in sn-glycerol-3-phosphate (G3P) import. Probably responsible for the translocation of the substrate across the membrane. This Salmonella typhi protein is sn-glycerol-3-phosphate transport system permease protein UgpE (ugpE).